Reading from the N-terminus, the 219-residue chain is AA11 family lytic polysaccharide monooxygenase A (219 aa).

The first 18 residues, 1-18 (MMLSKVVMGLLTASLAAA), serve as a signal peptide directing secretion. His-19 contacts Cu(+). 3 disulfide bridges follow: Cys-58-Cys-154, Cys-94-Cys-116, and Cys-185-Cys-218. An N-linked (GlcNAc...) asparagine glycan is attached at Asn-80. Position 89 (His-89) interacts with Cu(+).

Belongs to the polysaccharide monooxygenase AA11 family. Cu(2+) is required as a cofactor.

In terms of biological role, lytic polysaccharide monooxygenase (LPMO) that depolymerizes chitin via the oxidation of scissile beta-(1-4)-glycosidic bonds, yielding C1 or C4 oxidation products. Catalysis by LPMOs requires the reduction of the active-site copper from Cu(II) to Cu(I) by a reducing agent and H(2)O(2) or O(2) as a cosubstrate. Has considerable affinity for alpha-chitin and, more so, beta-chitin. Active toward both alpha-chitin and beta-chitin allomorphs and enhances chitin degradation by an endoacting chitinase, in particular for alpha-chitin, and so plays a role in fungal chitin turnover. The catalytic activity increases when supplying reactions with hydrogen peroxide, confirming that it has peroxygenase activity. Does not show activity on phosphoric acid-swollen cellulose (PASC), Avicel, tamarind xyloglucan, birchwood xylan, beechwood xylan, acetyl glucuronoxylan from aspen, ivory nut mannan, acetylated konjac glucomannan, potato starch, heparin, hyaluronic acid, and chitosan. The polypeptide is AA11 family lytic polysaccharide monooxygenase A (Aspergillus fumigatus (strain CBS 144.89 / FGSC A1163 / CEA10) (Neosartorya fumigata)).